Here is a 241-residue protein sequence, read N- to C-terminus: PRA1 family protein H (241 aa).

Transmembrane regions (helical) follow at residues 142–162, 189–205, and 209–228; these read LFIVFFACALYQMPLALVGLL, LSIGIGQCATAVLLTFL, and MALFSALAISYSVMILHAGF.

Belongs to the PRA1 family.

It is found in the endoplasmic reticulum membrane. May be involved in both secretory and endocytic intracellular trafficking in the endosomal/prevacuolar compartments. In Arabidopsis thaliana (Mouse-ear cress), this protein is PRA1 family protein H (PRA1H).